A 358-amino-acid polypeptide reads, in one-letter code: Protein UL24 (358 aa).

Belongs to the herpesviridae US22 family.

The protein resides in the virion tegument. The polypeptide is Protein UL24 (UL24) (Homo sapiens (Human)).